A 653-amino-acid chain; its full sequence is Sodium-dependent phosphate transporter 2 (653 aa).

A topological domain (extracellular) is located at residue Met-1. The helical transmembrane segment at Val-2 to Phe-22 threads the bilayer. Over Ser-23–Gln-46 the chain is Cytoplasmic. The helical transmembrane segment at Ala-47 to Gly-67 threads the bilayer. Topologically, residues Glu-68 to Leu-86 are extracellular. A glycan (N-linked (GlcNAc...) asparagine) is linked at Asn-81. The helical transmembrane segment at Leu-87–Phe-107 threads the bilayer. Residues Leu-108–Arg-109 are Cytoplasmic-facing. Residues Leu-110–Ile-130 traverse the membrane as a helical segment. At Gly-131–Lys-142 the chain is on the extracellular side. A helical membrane pass occupies residues Ile-143 to Leu-163. The Cytoplasmic portion of the chain corresponds to Met-164–Tyr-187. Residues Ala-188 to Leu-208 form a helical membrane-spanning segment. Over Glu-209–Ala-217 the chain is Extracellular. A helical transmembrane segment spans residues Leu-218–Trp-238. Topologically, residues Met-239–Glu-483 are cytoplasmic. Residues Val-484 to Gly-504 form a helical membrane-spanning segment. At Gly-505–Ser-532 the chain is on the extracellular side. Residues Thr-533–Gly-553 form a helical membrane-spanning segment. At Arg-554–Gly-572 the chain is on the cytoplasmic side. Residues Phe-573 to Ser-587 form a helical membrane-spanning segment. At Asn-588–Ser-594 the chain is on the extracellular side. The helical transmembrane segment at Thr-595–Arg-610 threads the bilayer. Residues Ser-611–Asn-622 lie on the Cytoplasmic side of the membrane. The chain crosses the membrane as a helical span at residues Ile-623–Ala-643. The Extracellular portion of the chain corresponds to Ile-644–Val-653.

The protein belongs to the inorganic phosphate transporter (PiT) (TC 2.A.20) family. As to quaternary structure, homodimer.

It localises to the cell membrane. The protein resides in the apical cell membrane. The enzyme catalyses 2 Na(+)(out) + phosphate(out) = 2 Na(+)(in) + phosphate(in). Functionally, sodium-phosphate symporter which preferentially transports the monovalent form of phosphate with a stoichiometry of two sodium ions per phosphate ion. The polypeptide is Sodium-dependent phosphate transporter 2 (slc20a2) (Xenopus tropicalis (Western clawed frog)).